The chain runs to 98 residues: Cell division topological specificity factor (98 aa).

It belongs to the MinE family.

Prevents the cell division inhibition by proteins MinC and MinD at internal division sites while permitting inhibition at polar sites. This ensures cell division at the proper site by restricting the formation of a division septum at the midpoint of the long axis of the cell. This chain is Cell division topological specificity factor, found in Moorella thermoacetica (strain ATCC 39073 / JCM 9320).